Reading from the N-terminus, the 297-residue chain is Homoserine kinase (297 aa).

An ATP-binding site is contributed by 82–92 (PVSRGLGSSAA).

The protein belongs to the GHMP kinase family. Homoserine kinase subfamily.

The protein localises to the cytoplasm. The catalysed reaction is L-homoserine + ATP = O-phospho-L-homoserine + ADP + H(+). The protein operates within amino-acid biosynthesis; L-threonine biosynthesis; L-threonine from L-aspartate: step 4/5. Its function is as follows. Catalyzes the ATP-dependent phosphorylation of L-homoserine to L-homoserine phosphate. The sequence is that of Homoserine kinase from Clostridium botulinum (strain Okra / Type B1).